A 656-amino-acid polypeptide reads, in one-letter code: DNA topoisomerase 3 (656 aa).

Residues 2–156 (KVLCVAEKNS…QVYRAVFSHL (155 aa)) form the Toprim domain. A Topo IA-type catalytic domain is found at 172–635 (DMKSVHAVGT…DIVEKYRKYW (464 aa)). Tyr356 functions as the O-(5'-phospho-DNA)-tyrosine intermediate in the catalytic mechanism.

The protein belongs to the type IA topoisomerase family. In terms of assembly, forms a complex with SGS1 and RMI1. Interacts with SGS1.

The catalysed reaction is ATP-independent breakage of single-stranded DNA, followed by passage and rejoining.. Its function is as follows. Releases the supercoiling and torsional tension of DNA introduced during the DNA replication and transcription by transiently cleaving and rejoining one strand of the DNA duplex. Introduces a single-strand break via transesterification at a target site in duplex DNA. The scissile phosphodiester is attacked by the catalytic tyrosine of the enzyme, resulting in the formation of a DNA-(5'-phosphotyrosyl)-enzyme intermediate and the expulsion of a 3'-OH DNA strand. The free DNA strand than undergoes passage around the unbroken strand thus removing DNA supercoils. Finally, in the religation step, the DNA 3'-OH attacks the covalent intermediate to expel the active-site tyrosine and restore the DNA phosphodiester backbone. Essential for proper chromosome segregation in both meiosis and mitosis. Weakly relaxes negative supercoils and displays a distinct preference for binding single-stranded DNA. The TOP3-SGS1 protein complex may function as a eukaryotic reverse gyrase introducing positive supercoils into extrachromosomal ribosomal DNA rings. This is DNA topoisomerase 3 (TOP3) from Saccharomyces cerevisiae (strain ATCC 204508 / S288c) (Baker's yeast).